The chain runs to 217 residues: Probable transaldolase (217 aa).

The active-site Schiff-base intermediate with substrate is K83.

The protein belongs to the transaldolase family. Type 3B subfamily.

The protein resides in the cytoplasm. It carries out the reaction D-sedoheptulose 7-phosphate + D-glyceraldehyde 3-phosphate = D-erythrose 4-phosphate + beta-D-fructose 6-phosphate. The protein operates within carbohydrate degradation; pentose phosphate pathway; D-glyceraldehyde 3-phosphate and beta-D-fructose 6-phosphate from D-ribose 5-phosphate and D-xylulose 5-phosphate (non-oxidative stage): step 2/3. Its function is as follows. Transaldolase is important for the balance of metabolites in the pentose-phosphate pathway. The protein is Probable transaldolase of Fervidobacterium nodosum (strain ATCC 35602 / DSM 5306 / Rt17-B1).